The following is a 502-amino-acid chain: uncharacterized protein (502 aa).

This is an uncharacterized protein from Agrobacterium vitis (Rhizobium vitis).